Consider the following 294-residue polypeptide: Cytidine deaminase (294 aa).

CMP/dCMP-type deaminase domains are found at residues 48-168 (DEDA…FGPK) and 186-294 (LTGD…VLLA). Residue 89–91 (NME) participates in substrate binding. Position 102 (His-102) interacts with Zn(2+). Glu-104 (proton donor) is an active-site residue. The Zn(2+) site is built by Cys-129 and Cys-132.

The protein belongs to the cytidine and deoxycytidylate deaminase family. As to quaternary structure, homodimer. Zn(2+) serves as cofactor.

It carries out the reaction cytidine + H2O + H(+) = uridine + NH4(+). The catalysed reaction is 2'-deoxycytidine + H2O + H(+) = 2'-deoxyuridine + NH4(+). In terms of biological role, this enzyme scavenges exogenous and endogenous cytidine and 2'-deoxycytidine for UMP synthesis. The protein is Cytidine deaminase of Escherichia coli O7:K1 (strain IAI39 / ExPEC).